A 164-amino-acid polypeptide reads, in one-letter code: Cytochrome c-type biogenesis protein CcmE (164 aa).

Residues 1–7 (MTRKQRR) are Cytoplasmic-facing. The helical; Signal-anchor for type II membrane protein transmembrane segment at 8–28 (LLMIGGAGVVLVVAVGLVLNA) threads the bilayer. The Periplasmic portion of the chain corresponds to 29 to 164 (MRGSIVFFST…ASADAAGPSR (136 aa)). Heme contacts are provided by His-122 and Tyr-126. Residues 137–149 (KQGHWKDDYEKKP) are compositionally biased toward basic and acidic residues. The interval 137-164 (KQGHWKDDYEKKPPGAPGASADAAGPSR) is disordered. A compositionally biased stretch (low complexity) spans 153–164 (PGASADAAGPSR).

Belongs to the CcmE/CycJ family.

Its subcellular location is the cell inner membrane. In terms of biological role, heme chaperone required for the biogenesis of c-type cytochromes. Transiently binds heme delivered by CcmC and transfers the heme to apo-cytochromes in a process facilitated by CcmF and CcmH. The polypeptide is Cytochrome c-type biogenesis protein CcmE (Rhodopseudomonas palustris (strain BisB5)).